A 372-amino-acid chain; its full sequence is Tubby-like F-box protein 9 (372 aa).

A disordered region spans residues M1–R51. The span at S7 to S18 shows a compositional bias: low complexity. A compositionally biased stretch (acidic residues) spans G40–E49. Positions E50–G105 constitute an F-box domain.

This sequence belongs to the TUB family. Ubiquitous.

This chain is Tubby-like F-box protein 9 (TULP9), found in Oryza sativa subsp. japonica (Rice).